The following is a 220-amino-acid chain: Fructose-6-phosphate aldolase 1 (220 aa).

Catalysis depends on Lys85, which acts as the Schiff-base intermediate with substrate.

Belongs to the transaldolase family. Type 3A subfamily. As to quaternary structure, homodecamer. Five subunits are arranged as a pentamer, and two ring-like pentamers pack like a donut to form the decamer.

It localises to the cytoplasm. It catalyses the reaction beta-D-fructose 6-phosphate = dihydroxyacetone + D-glyceraldehyde 3-phosphate. Inhibited by glycerol, inorganic phosphate and arabinose 5-phosphate. Functionally, catalyzes the reversible formation of fructose 6-phosphate from dihydroxyacetone (DHA) and D-glyceraldehyde 3-phosphate via an aldolization reaction. Can utilize several aldehydes as acceptor compounds in vitro, and hydroxyacetone (HA) or 1-hydroxy-butan-2-one as alternative donor substrate. Is also able to catalyze the direct stereoselective self-aldol addition of glycolaldehyde to furnish D-(-)-threose, and cross-aldol reactions of glycolaldehyde to other aldehyde acceptors. Is not able to cleave fructose, fructose 1-phosphate, glucose 6-phosphate, sedoheptulose 1,7-bisphosphate, xylulose 5-phosphate, ribulose 5-phosphate, and fructose 1,6-bisphosphate; cannot use dihydroxyacetone phosphate as donor compound nor D-glyceraldehyde as acceptor. Does not display transaldolase activity. The sequence is that of Fructose-6-phosphate aldolase 1 (fsaA) from Escherichia coli (strain K12).